The following is a 158-amino-acid chain: NAD(P)H-quinone oxidoreductase subunit J, chloroplastic (158 aa).

Belongs to the complex I 30 kDa subunit family. As to quaternary structure, NDH is composed of at least 16 different subunits, 5 of which are encoded in the nucleus.

The protein localises to the plastid. It localises to the chloroplast thylakoid membrane. The catalysed reaction is a plastoquinone + NADH + (n+1) H(+)(in) = a plastoquinol + NAD(+) + n H(+)(out). It catalyses the reaction a plastoquinone + NADPH + (n+1) H(+)(in) = a plastoquinol + NADP(+) + n H(+)(out). In terms of biological role, NDH shuttles electrons from NAD(P)H:plastoquinone, via FMN and iron-sulfur (Fe-S) centers, to quinones in the photosynthetic chain and possibly in a chloroplast respiratory chain. The immediate electron acceptor for the enzyme in this species is believed to be plastoquinone. Couples the redox reaction to proton translocation, and thus conserves the redox energy in a proton gradient. In Daucus carota (Wild carrot), this protein is NAD(P)H-quinone oxidoreductase subunit J, chloroplastic.